The chain runs to 233 residues: Histone H1-I (233 aa).

Disordered stretches follow at residues 1-55 (MSDS…HPPV) and 115-233 (TGAS…KKSK). Positions 17–29 (KAASPAKSPAKSP) are enriched in low complexity. The region spanning 51–125 (THPPVSEMVV…GASGSFKMPP (75 aa)) is the H15 domain. Basic and acidic residues-rich tracts occupy residues 128 to 137 (KKVDRPESAP) and 146 to 155 (TRVERKEKKV). Composition is skewed to basic residues over residues 172 to 213 (AAKK…KPTP) and 223 to 233 (AAARKPAKKSK).

The protein belongs to the histone H1/H5 family.

Its subcellular location is the nucleus. It localises to the chromosome. Histones H1 are necessary for the condensation of nucleosome chains into higher-order structures. The chain is Histone H1-I from Glyptotendipes barbipes (Midge).